Reading from the N-terminus, the 177-residue chain is 2-C-methyl-D-erythritol 2,4-cyclodiphosphate synthase (177 aa).

Asp-8 and His-10 together coordinate a divalent metal cation. 4-CDP-2-C-methyl-D-erythritol 2-phosphate is bound by residues Asp-8 to His-10 and His-34 to Ser-35. His-42 is a binding site for a divalent metal cation. 4-CDP-2-C-methyl-D-erythritol 2-phosphate contacts are provided by residues Asp-56 to Gly-58, Phe-61 to Asp-65, Thr-132 to Glu-135, Phe-139, and Arg-142.

Belongs to the IspF family. Homotrimer. It depends on a divalent metal cation as a cofactor.

It carries out the reaction 4-CDP-2-C-methyl-D-erythritol 2-phosphate = 2-C-methyl-D-erythritol 2,4-cyclic diphosphate + CMP. The protein operates within isoprenoid biosynthesis; isopentenyl diphosphate biosynthesis via DXP pathway; isopentenyl diphosphate from 1-deoxy-D-xylulose 5-phosphate: step 4/6. Its function is as follows. Involved in the biosynthesis of isopentenyl diphosphate (IPP) and dimethylallyl diphosphate (DMAPP), two major building blocks of isoprenoid compounds. Catalyzes the conversion of 4-diphosphocytidyl-2-C-methyl-D-erythritol 2-phosphate (CDP-ME2P) to 2-C-methyl-D-erythritol 2,4-cyclodiphosphate (ME-CPP) with a corresponding release of cytidine 5-monophosphate (CMP). This is 2-C-methyl-D-erythritol 2,4-cyclodiphosphate synthase from Agathobacter rectalis (strain ATCC 33656 / DSM 3377 / JCM 17463 / KCTC 5835 / VPI 0990) (Eubacterium rectale).